Here is a 314-residue protein sequence, read N- to C-terminus: Short-chain dehydrogenase/reductase drtF (314 aa).

NADP(+) is bound by residues Val-26, Lys-50, Asp-73, Asn-100, Tyr-185, and Lys-189. Tyr-185 acts as the Proton acceptor in catalysis. The active-site Lowers pKa of active site Tyr is the Lys-189.

Belongs to the short-chain dehydrogenases/reductases (SDR) family.

Its pathway is secondary metabolite biosynthesis; terpenoid biosynthesis. Its function is as follows. Short-chain dehydrogenase/reductase; part of the gene cluster that mediates the biosynthesis of various drimane-type sesquiterpene esters, compounds that exhibit diverse biological activities and are widely present in eukaryotes. The pathway begins with the synthesis of the backbone drimenol by the terpene cyclase drtB using farnesyl pyrophosphate (FPP) as substrate. The cytochrome P450 monooxygenase drtD is then responsible for the hydroxylations at C-6, C-9 and C-12, as well as the oxidation of hydroxyl groups at C-6 and C-11 to a ketone and an aldehyde, respectively. Then, the biosynthesis can go in two directions, either the hydroxylated drimenol is further hydroxylated at C-2 and C-3 by an enzyme(s) not associated with the drt cluster, or the FAD-binding oxidoreductase drtC further oxidizes C-11 or C-12 to form the butyrolactone ring. DrtB, drtD and drtC are solely responsible for the formation of the different drimane structures observed during drimane sesquiterpenes biosynthesis. The polyketide synthase drtA synthesizes different lengths (C6 and C8) of PKS chains, which are then oxidized to varying degrees by the short-chain dehydrogenase drtF. Finally, these PKS chains are transferred onto drimane sesquiterpenes by the acyltransferase drtE, forming the sesquiterpene esters. In addition to the different fatty acyl-CoA chains produced by drtA, drtE is also able to use cinnamoyl-CoA as a substrate. In Aspergillus calidoustus, this protein is Short-chain dehydrogenase/reductase drtF.